The following is a 367-amino-acid chain: Glutamate 5-kinase (367 aa).

Residue Lys10 coordinates ATP. Substrate is bound by residues Ser50, Asp137, and Asn149. Residues 169-170 and 211-217 contribute to the ATP site; these read TD and TGGMGTK. Residues 275–353 form the PUA domain; sequence AGELTVDAGA…QQIDAILGYE (79 aa).

This sequence belongs to the glutamate 5-kinase family.

The protein resides in the cytoplasm. The catalysed reaction is L-glutamate + ATP = L-glutamyl 5-phosphate + ADP. The protein operates within amino-acid biosynthesis; L-proline biosynthesis; L-glutamate 5-semialdehyde from L-glutamate: step 1/2. Catalyzes the transfer of a phosphate group to glutamate to form L-glutamate 5-phosphate. The sequence is that of Glutamate 5-kinase from Klebsiella pneumoniae (strain 342).